The sequence spans 62 residues: MTCCNQQSSQPKTTTTCAGGETSCYKKTWSDHRGSRTERGCGCPHVKPGIKLTCCKTDECNN.

4 disulfides stabilise this stretch: Cys-3–Cys-24, Cys-17–Cys-41, Cys-43–Cys-54, and Cys-55–Cys-60.

It belongs to the three-finger toxin family. Short-chain subfamily. Type I alpha-neurotoxin sub-subfamily. Expressed by the venom gland.

The protein localises to the secreted. Functionally, bird-specific neurotoxin (tested on chicken) that acts as pseudo-irreversible antagonists at the nicotinic acetylcholine receptor (nAChR) of the skeletal neuromuscular junction. Has no significant effect on the electrically-induced twitches of the rat isolated phrenic nerve-diaphragm preparation. This Pseudechis colletti (Collett's snake) protein is Alpha-elapitoxin-Pc1.